The chain runs to 301 residues: Probable alpha-L-glutamate ligase (301 aa).

The 184-residue stretch at 104–287 folds into the ATP-grasp domain; that stretch reads LQFLSRKGID…IAGMIIEFIE (184 aa). Residues lysine 141, 178 to 179, aspartate 187, and 211 to 213 each bind ATP; these read EF and RSN. Mg(2+) contacts are provided by aspartate 248, glutamate 260, and asparagine 262. 3 residues coordinate Mn(2+): aspartate 248, glutamate 260, and asparagine 262.

This sequence belongs to the RimK family. It depends on Mg(2+) as a cofactor. Mn(2+) is required as a cofactor.

The sequence is that of Probable alpha-L-glutamate ligase from Coxiella burnetii (strain CbuK_Q154) (Coxiella burnetii (strain Q154)).